The sequence spans 94 residues: Large ribosomal subunit protein uL29 (94 aa).

The tract at residues 65-94 is disordered; sequence ANPGERKSRVFSRAKRKKKNLARLSAKAKG. Positions 73–94 are enriched in basic residues; that stretch reads RVFSRAKRKKKNLARLSAKAKG.

The protein belongs to the universal ribosomal protein uL29 family.

This is Large ribosomal subunit protein uL29 from Leptospira interrogans serogroup Icterohaemorrhagiae serovar copenhageni (strain Fiocruz L1-130).